The following is a 156-amino-acid chain: Small ribosomal subunit protein uS10m (156 aa).

The protein belongs to the universal ribosomal protein uS10 family.

The protein resides in the mitochondrion. Ribosomal protein required for normal mitochondrial function and normal larval development. Thought to have a role in insulin/IGF signaling. This chain is Small ribosomal subunit protein uS10m (mrps-10), found in Caenorhabditis elegans.